Here is a 528-residue protein sequence, read N- to C-terminus: Pentatricopeptide repeat-containing protein At1g62914, mitochondrial (528 aa).

Residues 1–20 (MLAKISSSAKRFVHRSLVVR) constitute a mitochondrion transit peptide. PPR repeat units follow at residues 77 to 111 (SIIEFSKLLSAIAKMNKFDLVISFGEKMEILGISH), 112 to 146 (NLYTYNILINCFCRCSRLSLALALLGKMMKLGYEP), 147 to 181 (DIVTLNSLLNGFCHGNRISDAVALVDQMVEMGYKP), 182 to 216 (DTVTFTTLIHGLFLHNKASEAVALIDRMVQRGCQP), 217 to 251 (DLVTYGAVVNGLCKRGDTDLALNLLNKMEAAKIEA), 252 to 286 (NVVIYSTVIDSLCKYRHEDDALNLFTEMENKGVRP), 287 to 321 (NVITYSSLISCLCNYGRWSDASRLLSDMIERKINP), 322 to 356 (NLVTFSALIDAFVKKGKLVKAEKLYEEMIKRSIDP), 357 to 391 (NIFTYSSLINGFCMLDRLGEAKQMLELMIRKDCLP), 392 to 426 (NVVTYNTLINGFCKAKRVDKGMELFREMSQRGLVG), 427 to 461 (NTVTYTTLIHGFFQARDCDNAQMVFKQMVSVGVHP), 462 to 496 (NILTYNILLDGLCKNGKLAKAMVVFEYLQRSTMEP), and 497 to 528 (DIYTYNIMIEGMCKAGKWKMGGIYFVASALKE).

This sequence belongs to the PPR family. P subfamily.

It localises to the mitochondrion. This Arabidopsis thaliana (Mouse-ear cress) protein is Pentatricopeptide repeat-containing protein At1g62914, mitochondrial.